A 526-amino-acid chain; its full sequence is Nuclear pore glycoprotein p62 (526 aa).

Serine 2 is subject to N-acetylserine. 4 repeat units span residues 6–7, 46–47, 78–79, and 115–116. Positions 6-144 are 5 X 2 AA repeats of F-G; sequence FGGTGAPAGG…GTAPTGFVFG (139 aa). Residues 43 to 82 are disordered; it reads GFNFGTPSQPAATTPSTSLFSLTTQTPTTQTPGFNFGTTP. Residues 46 to 81 show a composition bias toward low complexity; the sequence is FGTPSQPAATTPSTSLFSLTTQTPTTQTPGFNFGTT. A compositionally biased stretch (polar residues) spans 128 to 137; the sequence is SGSTSNQGTA. Positions 128–148 are disordered; that stretch reads SGSTSNQGTAPTGFVFGSSTT. Repeat unit 5 spans residues 143–144; sequence FG. Residues 332–462 are required for centrosome localization; the sequence is MTYAQLESLI…QDLKDIIEHL (131 aa). The stretch at 332–462 forms a coiled coil; that stretch reads MTYAQLESLI…QDLKDIIEHL (131 aa). Residue threonine 377 is glycosylated (O-linked (GlcNAc) threonine). Residues serine 412 and serine 422 each carry the phosphoserine modification. O-linked (GlcNAc) serine glycosylation is present at serine 472.

Belongs to the nucleoporin NSP1/NUP62 family. As to quaternary structure, component of the p62 complex, a complex at least composed of NUP62, NUP54, and NUP58. Interacts with NUP88. Interacts with NUTF2. Interacts with HIKESHI. Interacts with OSBPL8. Interacts with CAPG. Interacts with SAS6 and TUBG1 at the centrosome. Interacts with MCM3AP. In terms of processing, O-glycosylated. The inner channel of the NPC has a different redox environment from the cytoplasm and allows the formation of interchain disulfide bonds between some nucleoporins, the significant increase of these linkages upon oxidative stress reduces the permeability of the NPC.

It localises to the nucleus. Its subcellular location is the nuclear pore complex. The protein localises to the cytoplasm. The protein resides in the cytoskeleton. It is found in the spindle pole. It localises to the nucleus envelope. Its subcellular location is the microtubule organizing center. The protein localises to the centrosome. In terms of biological role, essential component of the nuclear pore complex. The N-terminal is probably involved in nucleocytoplasmic transport. The C-terminal is involved in protein-protein interaction probably via coiled-coil formation, promotes its association with centrosomes and may function in anchorage of p62 to the pore complex. Plays a role in mitotic cell cycle progression by regulating centrosome segregation, centriole maturation and spindle orientation. It might be involved in protein recruitment to the centrosome after nuclear breakdown. This chain is Nuclear pore glycoprotein p62 (Nup62), found in Mus musculus (Mouse).